Consider the following 200-residue polypeptide: Elongation factor Ts (200 aa).

Positions Thr81 to Val84 are involved in Mg(2+) ion dislocation from EF-Tu.

The protein belongs to the EF-Ts family.

It localises to the cytoplasm. Its function is as follows. Associates with the EF-Tu.GDP complex and induces the exchange of GDP to GTP. It remains bound to the aminoacyl-tRNA.EF-Tu.GTP complex up to the GTP hydrolysis stage on the ribosome. The polypeptide is Elongation factor Ts (Nitratidesulfovibrio vulgaris (strain DSM 19637 / Miyazaki F) (Desulfovibrio vulgaris)).